Here is a 277-residue protein sequence, read N- to C-terminus: Diaminopimelate epimerase (277 aa).

Asn15 and Asn74 together coordinate substrate. Catalysis depends on Cys83, which acts as the Proton donor. Residues 84–85 (GN), Asn159, Asn194, and 212–213 (ER) contribute to the substrate site. The active-site Proton acceptor is the Cys221. Residue 222–223 (GT) coordinates substrate.

It belongs to the diaminopimelate epimerase family. Homodimer.

It is found in the cytoplasm. It carries out the reaction (2S,6S)-2,6-diaminopimelate = meso-2,6-diaminopimelate. It functions in the pathway amino-acid biosynthesis; L-lysine biosynthesis via DAP pathway; DL-2,6-diaminopimelate from LL-2,6-diaminopimelate: step 1/1. In terms of biological role, catalyzes the stereoinversion of LL-2,6-diaminopimelate (L,L-DAP) to meso-diaminopimelate (meso-DAP), a precursor of L-lysine and an essential component of the bacterial peptidoglycan. The sequence is that of Diaminopimelate epimerase from Corynebacterium glutamicum (strain R).